The following is a 290-amino-acid chain: MAEKQQAVAEFYDNSTGAWEVFFGDHLHDGFYDPGTTATIAGSRAAVVRMIDEALRFANISDDPAKKPKTMLDVGCGIGGTCLHVAKKYGIQCKGITISSEQVKCAQGFAEEQGLEKKVSFDVGDALDMPYKDGTFDLVFTIQCIEHIQDKEKFIREMVRVAAPGAPIVIVSYAHRNLSPSEGSLKPEEKKVLKKICDNIVLSWVCSSADYVRWLTPLPVEDIKAADWTQNITPFYPLLMKEAFTWKGFTSLLMKGGWSAIKVVLAVRMMAKAADDGVLKFVAVTCRKSK.

An SAM motif I region spans residues 71–80 (MLDVGCGIGG). The Vacuolar targeting signal signature appears at 133–139 (DGTFDLV). The segment at 134-142 (GTFDLVFTI) is SAM motif II. The segment at 161–170 (VAAPGAPIVI) is SAM motif III.

The protein belongs to the class I-like SAM-binding methyltransferase superfamily. gTMT family. Homodimer. In terms of tissue distribution, accumulates in tissues actively synthesizing monoterpenoid indole alkaloids (MIAs) (at protein level). Mainly expressed in young leaves and, to a lower extent, in roots and stems.

It localises to the vacuole membrane. The enzyme catalyses picrinine + S-adenosyl-L-methionine = ervincine + S-adenosyl-L-homocysteine + H(+). The protein operates within alkaloid biosynthesis; vindoline biosynthesis. S-adenosyl-L-methionine-dependent N-methyltransferase involved in the biosynthesis of biologically active monoterpenoid indole alkaloids (MIAs) natural products including vindoline. Catalyzes the conversion of picrinine to N-methylpicrinine (ervincine). Also accepts, with low efficiency, 21-hydroxycyclolochnericine and norajmaline as substrates. The protein is Picrinine-N-methytransferase of Rauvolfia serpentina (Serpentine wood).